The following is a 439-amino-acid chain: Ribosomal protein uS12 methylthiotransferase RimO (439 aa).

The region spanning 5–117 is the MTTase N-terminal domain; that stretch reads KKLHLISLGC…IDELIASKQS (113 aa). [4Fe-4S] cluster contacts are provided by cysteine 14, cysteine 48, cysteine 80, cysteine 149, cysteine 153, and cysteine 156. One can recognise a Radical SAM core domain in the interval 135-363; that stretch reads TGSNYHAYIK…GEIAERSTLR (229 aa). The TRAM domain maps to 366 to 437; sequence EKMVGKTVEL…GMQLLATLIK (72 aa).

This sequence belongs to the methylthiotransferase family. RimO subfamily. It depends on [4Fe-4S] cluster as a cofactor.

It is found in the cytoplasm. The catalysed reaction is L-aspartate(89)-[ribosomal protein uS12]-hydrogen + (sulfur carrier)-SH + AH2 + 2 S-adenosyl-L-methionine = 3-methylsulfanyl-L-aspartate(89)-[ribosomal protein uS12]-hydrogen + (sulfur carrier)-H + 5'-deoxyadenosine + L-methionine + A + S-adenosyl-L-homocysteine + 2 H(+). In terms of biological role, catalyzes the methylthiolation of an aspartic acid residue of ribosomal protein uS12. The sequence is that of Ribosomal protein uS12 methylthiotransferase RimO from Sulfurovum sp. (strain NBC37-1).